Consider the following 513-residue polypeptide: ATP synthase subunit alpha (513 aa).

ATP is bound at residue 169 to 176 (GDRQTGKT).

Belongs to the ATPase alpha/beta chains family. In terms of assembly, F-type ATPases have 2 components, CF(1) - the catalytic core - and CF(0) - the membrane proton channel. CF(1) has five subunits: alpha(3), beta(3), gamma(1), delta(1), epsilon(1). CF(0) has three main subunits: a(1), b(2) and c(9-12). The alpha and beta chains form an alternating ring which encloses part of the gamma chain. CF(1) is attached to CF(0) by a central stalk formed by the gamma and epsilon chains, while a peripheral stalk is formed by the delta and b chains.

Its subcellular location is the cell inner membrane. It catalyses the reaction ATP + H2O + 4 H(+)(in) = ADP + phosphate + 5 H(+)(out). Its function is as follows. Produces ATP from ADP in the presence of a proton gradient across the membrane. The alpha chain is a regulatory subunit. This chain is ATP synthase subunit alpha, found in Ralstonia pickettii (strain 12J).